The primary structure comprises 78 residues: Protein M6 (78 aa).

It belongs to the A9/FIL1 family. As to expression, tapetum of anthers.

It is found in the secreted. The protein is Protein M6 (M6) of Lilium henryi (Henry's lily).